Consider the following 78-residue polypeptide: DNA gyrase inhibitor YacG (78 aa).

4 residues coordinate Zn(2+): Cys-7, Cys-10, Cys-26, and Cys-30.

Belongs to the DNA gyrase inhibitor YacG family. Interacts with GyrB. The cofactor is Zn(2+).

Inhibits all the catalytic activities of DNA gyrase by preventing its interaction with DNA. Acts by binding directly to the C-terminal domain of GyrB, which probably disrupts DNA binding by the gyrase. This chain is DNA gyrase inhibitor YacG, found in Shewanella piezotolerans (strain WP3 / JCM 13877).